Reading from the N-terminus, the 612-residue chain is Peroxisomal carnitine O-octanoyltransferase (612 aa).

The residue at position 1 (M1) is an N-acetylmethionine. K40 and K57 each carry N6-succinyllysine. The active-site Proton acceptor is the H327. Residues K406 and 410–417 (KKEALHPD) contribute to the CoA site. The residue at position 406 (K406) is an N6-acetyllysine; alternate. The residue at position 406 (K406) is an N6-succinyllysine; alternate. 3 residues coordinate (R)-carnitine: Y439, T441, and T452. Positions 610 to 612 (AHL) match the Microbody targeting signal motif.

Belongs to the carnitine/choline acetyltransferase family. Liver.

It is found in the peroxisome. The catalysed reaction is octanoyl-CoA + (R)-carnitine = O-octanoyl-(R)-carnitine + CoA. It catalyses the reaction 4,8-dimethylnonanoyl-CoA + (R)-carnitine = O-4,8-dimethylnonanoyl-(R)-carnitine + CoA. The protein operates within lipid metabolism; fatty acid beta-oxidation. Its function is as follows. Beta-oxidation of fatty acids. The highest activity concerns the C6 to C10 chain length substrate. This Rattus norvegicus (Rat) protein is Peroxisomal carnitine O-octanoyltransferase (Crot).